A 127-amino-acid chain; its full sequence is Small ribosomal subunit protein eS8 (127 aa).

Positions methionine 1–arginine 25 are disordered.

It belongs to the eukaryotic ribosomal protein eS8 family. In terms of assembly, part of the 30S ribosomal subunit.

The protein is Small ribosomal subunit protein eS8 of Thermoplasma volcanium (strain ATCC 51530 / DSM 4299 / JCM 9571 / NBRC 15438 / GSS1).